We begin with the raw amino-acid sequence, 88 residues long: Small ribosomal subunit protein bS16c (88 aa).

This sequence belongs to the bacterial ribosomal protein bS16 family.

It localises to the plastid. The protein localises to the chloroplast. The polypeptide is Small ribosomal subunit protein bS16c (Solanum bulbocastanum (Wild potato)).